The chain runs to 1729 residues: 182 kDa tankyrase-1-binding protein (1729 aa).

Residues 1-12 (MKVSTLRESSAM) are compositionally biased toward polar residues. The segment at 1–151 (MKVSTLRESS…VRKAPAPFRP (151 aa)) is disordered. Phosphoserine is present on Ser-14. Residues 46–63 (ALPAKPALPAKPSLLVPV) show a composition bias toward low complexity. Basic and acidic residues predominate over residues 117-127 (TGKEEAGKEEP). At Thr-131 the chain carries Phosphothreonine. 3 positions are modified to phosphoserine: Ser-178, Ser-221, and Ser-228. 3 disordered regions span residues 184–450 (GSRL…LAAL), 484–603 (PSGL…ESPL), and 657–880 (ETTQ…SSRD). An acidic region spans residues 210-1572 (DEDGSTLFRG…TEILDSAMYR (1363 aa)). The segment covering 230–245 (AECREEHSKTPEERSL) has biased composition (basic and acidic residues). Residue Thr-239 is modified to Phosphothreonine. Residues Ser-287 and Ser-301 each carry the phosphoserine modification. Over residues 352-363 (PSPGLPAEGAPE) the composition is skewed to low complexity. Over residues 364-374 (APRPSSPPPEV) the composition is skewed to pro residues. Phosphoserine is present on residues Ser-429, Ser-435, Ser-437, Ser-494, and Ser-498. Composition is skewed to low complexity over residues 500–512 (ITEA…AAEA), 524–541 (VSQQ…SGSS), and 572–583 (LPTTEGTPGLPL). Thr-501 bears the Phosphothreonine mark. 9 positions are modified to phosphoserine: Ser-601, Ser-672, Ser-691, Ser-695, Ser-712, Ser-724, Ser-744, Ser-762, and Ser-806. The span at 738–753 (PQPSSFSPSSWCQGAS) shows a compositional bias: polar residues. Over residues 803 to 812 (ASSSQDQSKV) the composition is skewed to polar residues. Thr-833 is modified (phosphothreonine). Phosphoserine is present on residues Ser-836, Ser-851, Ser-872, Ser-877, Ser-882, and Ser-893. The segment covering 858–872 (RDAELQDQEFGKRDS) has biased composition (basic and acidic residues). Tyr-897 carries the post-translational modification Phosphotyrosine. The tract at residues 897-1083 (YASQDANEQG…ADLEDGEMGK (187 aa)) is disordered. Residues Ser-899, Ser-920, Ser-936, and Ser-976 each carry the phosphoserine modification. At Thr-979 the chain carries Phosphothreonine. 17 positions are modified to phosphoserine: Ser-983, Ser-987, Ser-1004, Ser-1008, Ser-1013, Ser-1024, Ser-1029, Ser-1054, Ser-1073, Ser-1091, Ser-1103, Ser-1133, Ser-1138, Ser-1158, Ser-1178, Ser-1248, and Ser-1253. The span at 1012–1021 (GSRDAGRPGE) shows a compositional bias: basic and acidic residues. Over residues 1043–1054 (RDQSSWQNSDAS) the composition is skewed to polar residues. The interval 1240–1302 (EVGEGGGHSQ…GAVCSPGESK (63 aa)) is disordered. Thr-1282 bears the Phosphothreonine mark. Ser-1297, Ser-1328, Ser-1331, Ser-1383, and Ser-1385 each carry phosphoserine. A disordered region spans residues 1362-1561 (AREHGVGGVS…SPSQDFSFIE (200 aa)). Positions 1389 to 1400 (EARDPLEARELG) are enriched in basic and acidic residues. Residues 1406 to 1419 (GPETQGEDYSSSSL) show a composition bias toward polar residues. A phosphoserine mark is found at Ser-1435, Ser-1439, Ser-1450, Ser-1452, Ser-1473, Ser-1476, Ser-1503, and Ser-1506. Residues 1450-1542 (SGSQGLLEEM…SDQGPAQTSR (93 aa)) are tankyrase-binding. Phosphothreonine is present on Thr-1518. Phosphoserine is present on residues Ser-1533, Ser-1545, and Ser-1558. At Thr-1563 the chain carries Phosphothreonine. Positions 1575-1729 (ANLGRKRGHR…QALKLKKKKV (155 aa)) are disordered. Basic residues predominate over residues 1577–1586 (LGRKRGHRAP). Basic and acidic residues predominate over residues 1602-1615 (SDAHLFQDSTEPRA). Residues Ser-1620, Ser-1621, and Ser-1631 each carry the phosphoserine modification. The Nuclear localization signal signature appears at 1629–1635 (PQSRRTR). An N6-methyllysine modification is found at Lys-1644. Phosphoserine occurs at positions 1652, 1666, and 1715. The span at 1665–1679 (RSAEEGELAESKSSQ) shows a compositional bias: basic and acidic residues. A Nuclear localization signal motif is present at residues 1723–1729 (KLKKKKV).

In terms of assembly, binds to the ANK repeat domain of TNKS1 and TNKS2. In terms of processing, ADP-ribosylated by TNKS1 (in vitro). Detected in testis, ovary, lung, skeletal muscle, heart, prostate and pancreas, and at very low levels in brain and peripheral blood leukocytes.

It localises to the nucleus. The protein localises to the cytoplasm. The protein resides in the cytoskeleton. It is found in the chromosome. This is 182 kDa tankyrase-1-binding protein (TNKS1BP1) from Homo sapiens (Human).